Reading from the N-terminus, the 464-residue chain is Anthocyanidin 3-O-galactosyltransferase 3GT1 (464 aa).

An anthocyanidin is bound by residues serine 19 and histidine 21. The Proton acceptor role is filled by histidine 21. Asparagine 38 carries an N-linked (GlcNAc...) asparagine glycan. Catalysis depends on aspartate 121, which acts as the Charge relay. Residue histidine 152 participates in an anthocyanidin binding. 7 residues coordinate UDP-alpha-D-glucose: alanine 342, glutamine 344, histidine 359, tryptophan 362, asparagine 363, serine 364, and glutamate 367. Glycine 382 contributes to the an anthocyanidin binding site. Position 383 (aspartate 383) interacts with UDP-alpha-D-glucose.

Belongs to the UDP-glycosyltransferase family. As to quaternary structure, monomer. As to expression, mostly expressed in leaves and flowers and, to a lower extent, in roots. In flowers, mainly observed in petals, toruses and scapes, and at lower levels in pistils and stamens.

It carries out the reaction cyanidin + UDP-alpha-D-galactose = cyanidin 3-O-beta-D-galactoside + UDP + H(+). The enzyme catalyses cyanidin + UDP-alpha-D-glucose = cyanidin 3-O-beta-D-glucoside + UDP + H(+). It catalyses the reaction delphinidin + UDP-alpha-D-glucose = delphinidin 3-O-beta-D-glucoside + UDP. The catalysed reaction is malvidin + UDP-alpha-D-glucose = malvidin 3-O-beta-D-glucoside + UDP. It carries out the reaction delphinidin + UDP-alpha-D-galactose = delphinidin 3-O-beta-D-galactoside + UDP + H(+). The enzyme catalyses pelargonidin + UDP-alpha-D-galactose = pelargonidin 3-O-beta-D-galactoside betaine + UDP. It catalyses the reaction peonidin + UDP-alpha-D-galactose = peonidin 3-O-beta-D-galactoside + UDP. The catalysed reaction is malvidin + UDP-alpha-D-galactose = malvidin 3-O-beta-D-galactoside + UDP + H(+). It carries out the reaction petunidin + UDP-alpha-D-galactose = petunidin 3-O-beta-D-galactoside + UDP. The enzyme catalyses an anthocyanidin + UDP-alpha-D-glucose + H(+) = an anthocyanidin 3-O-beta-D-glucoside + UDP. It catalyses the reaction an anthocyanidin + UDP-alpha-D-galactose = an anthocyanidin 3-O-beta-D-galactoside + UDP. It functions in the pathway pigment biosynthesis; anthocyanin biosynthesis. Its function is as follows. Flavonoid 3-O-glycosyltransferase involved in the biosynthesis of anthocyanins conferring flower red/pink colors, mainly anthocyanidin 3-O-glycosides. Catalyzes the addition of UDP-sugar to the 3-OH of anthocyanidin, with a preference for UDP-galactose (UDP-Gal) as sugar donor and cyanidin as substrate; able to use delphinidin, pelargonidin, peonidin, malvidin and petunidin as substrates in the presence of UDP-Gal. Can also use UDP-glucose (UDP-Glu) as sugar donor with delphinidin, cyanidin and malvidin as substrates, but not active on pelargonidin, peonidin and petunidin. In Rhododendron delavayi (Rhododendron), this protein is Anthocyanidin 3-O-galactosyltransferase 3GT1.